Here is a 223-residue protein sequence, read N- to C-terminus: Phosphoribosylformylglycinamidine synthase subunit PurQ (223 aa).

Positions 2 to 223 (KTAIIQLPGL…FQSALELAKG (222 aa)) constitute a Glutamine amidotransferase type-1 domain. Cys-86 serves as the catalytic Nucleophile. Residues His-196 and Glu-198 contribute to the active site.

As to quaternary structure, part of the FGAM synthase complex composed of 1 PurL, 1 PurQ and 2 PurS subunits.

Its subcellular location is the cytoplasm. It carries out the reaction N(2)-formyl-N(1)-(5-phospho-beta-D-ribosyl)glycinamide + L-glutamine + ATP + H2O = 2-formamido-N(1)-(5-O-phospho-beta-D-ribosyl)acetamidine + L-glutamate + ADP + phosphate + H(+). The enzyme catalyses L-glutamine + H2O = L-glutamate + NH4(+). The protein operates within purine metabolism; IMP biosynthesis via de novo pathway; 5-amino-1-(5-phospho-D-ribosyl)imidazole from N(2)-formyl-N(1)-(5-phospho-D-ribosyl)glycinamide: step 1/2. Functionally, part of the phosphoribosylformylglycinamidine synthase complex involved in the purines biosynthetic pathway. Catalyzes the ATP-dependent conversion of formylglycinamide ribonucleotide (FGAR) and glutamine to yield formylglycinamidine ribonucleotide (FGAM) and glutamate. The FGAM synthase complex is composed of three subunits. PurQ produces an ammonia molecule by converting glutamine to glutamate. PurL transfers the ammonia molecule to FGAR to form FGAM in an ATP-dependent manner. PurS interacts with PurQ and PurL and is thought to assist in the transfer of the ammonia molecule from PurQ to PurL. The chain is Phosphoribosylformylglycinamidine synthase subunit PurQ from Bartonella henselae (strain ATCC 49882 / DSM 28221 / CCUG 30454 / Houston 1) (Rochalimaea henselae).